Consider the following 552-residue polypeptide: Cycloheximide resistance protein (552 aa).

The disordered stretch occupies residues 46–70; sequence VLNSSDKSQSSENKEQTEGDQATIQ. Residues 47-56 show a composition bias toward polar residues; sequence LNSSDKSQSS. Transmembrane regions (helical) follow at residues 100-120, 137-157, 168-188, 194-213, 225-246, 262-282, 346-362, 381-399, 419-439, 445-464, 477-494, and 518-539; these read AIAA…SAIY, LATL…LFWS, TPLY…TALS, LSVL…STGG, YSIA…GPLI, WSFW…SFSL, IYIA…FESV, YVST…LPTV, LPPA…FGWT, NWFV…FIIF, VEYL…RSVS, and WGSS…FFYL.

It belongs to the major facilitator superfamily. CAR1 family.

The protein resides in the membrane. Functionally, probable transporter. Confers resistance to cycloheximide. This is Cycloheximide resistance protein (CYHR) from Candida maltosa (Yeast).